Here is a 791-residue protein sequence, read N- to C-terminus: uncharacterized protein (791 aa).

The segment at 267-288 (APGESSAQSSYEQSTRAGDSAP) is disordered. Over residues 271 to 283 (SSAQSSYEQSTRA) the composition is skewed to polar residues.

This is an uncharacterized protein from Treponema pallidum (strain Nichols).